Reading from the N-terminus, the 401-residue chain is MLLVRKWLHTCFKYWIYFLPVVTLLLPLVCYPFLSISQKIYGYFVFTTISSLGWFFALRRRENQLKTAAVQLLQTKIRKLTENNEGLRQIRESLKEHQQESAQLQIQSQKLKNSLFHLQGLLVKTKGEGQKLETLLLHRTEENRCLKMQVDSLIQECGEKTEEVQTLNRELAETLAYQQALNDEYQATFSEQRNMLDKRQIYIGKLENKVQDLMYEIRNLLQLESDIAENIPSQESNAVTGNISLQLSSELKKIAFKAENIEAASSLTASRYLHTDTSVHNYSLECRQLFDSLREENLGMLFVYARQSQRAVFANALFKTWTGYCAEDFLKFGSDIVISGGKQWMEDLHSSREECSGRLVIKTKSRGHLPFRYCLMALNKGPLCYHVLGVLYPLHKEVLQS.

This sequence belongs to the UPF0242 family.

The protein is UPF0242 protein CPn_0755/CP_1117/CPj0755/CpB0783 of Chlamydia pneumoniae (Chlamydophila pneumoniae).